Consider the following 413-residue polypeptide: Gamma-glutamyl phosphate reductase (413 aa).

It belongs to the gamma-glutamyl phosphate reductase family.

It is found in the cytoplasm. The enzyme catalyses L-glutamate 5-semialdehyde + phosphate + NADP(+) = L-glutamyl 5-phosphate + NADPH + H(+). Its pathway is amino-acid biosynthesis; L-proline biosynthesis; L-glutamate 5-semialdehyde from L-glutamate: step 2/2. Its function is as follows. Catalyzes the NADPH-dependent reduction of L-glutamate 5-phosphate into L-glutamate 5-semialdehyde and phosphate. The product spontaneously undergoes cyclization to form 1-pyrroline-5-carboxylate. This Lactococcus lactis subsp. cremoris (strain MG1363) protein is Gamma-glutamyl phosphate reductase.